The following is a 623-amino-acid chain: Chaperone protein HtpG (623 aa).

An a; substrate-binding region spans residues 1 to 330 (MIMTQEKKKF…SEDLPLNISR (330 aa)). Residues 331-546 (ESLQHNSVLE…DAAMDIRMER (216 aa)) are b. The segment at 477-497 (SDIDVEQTTSQSEEKNTDSKK) is disordered. The segment covering 488 to 497 (SEEKNTDSKK) has biased composition (basic and acidic residues). The c stretch occupies residues 547-623 (FLIEQKQIAN…LNDIVQKAIL (77 aa)).

Belongs to the heat shock protein 90 family. Homodimer.

Its subcellular location is the cytoplasm. In terms of biological role, molecular chaperone. Has ATPase activity. The polypeptide is Chaperone protein HtpG (Rickettsia massiliae (strain Mtu5)).